Consider the following 90-residue polypeptide: Small ribosomal subunit protein uS17 (90 aa).

Belongs to the universal ribosomal protein uS17 family. In terms of assembly, part of the 30S ribosomal subunit.

Functionally, one of the primary rRNA binding proteins, it binds specifically to the 5'-end of 16S ribosomal RNA. The protein is Small ribosomal subunit protein uS17 of Burkholderia cenocepacia (strain ATCC BAA-245 / DSM 16553 / LMG 16656 / NCTC 13227 / J2315 / CF5610) (Burkholderia cepacia (strain J2315)).